A 594-amino-acid polypeptide reads, in one-letter code: MSSIVNKSGTRFAPKVRQRRAATGGTPTPKPRTPQLFIPESKEIEEDNSDNDKGVDENETAIVEKPSLVGERSLEGFTLTGTNGHDNEIGDEGPIDASTQNPKADVIEDNVTLKPAPLQTHRDQKVPRSSRLASLSKDNESRPSFKPSFLDSSSNSNGTARRLSTISNKLPKKIRLGSITENDMNLKTFKRHRVLGKPSSAKKPAGAHRISIVSKISPPTAMTDSLDRNEFSSETSTSREADENENYVISKVKDIPKKVRDGESAKYFIDEENFTMAELCKPNFPIGQISENFEKSKMAKKAKLEKRRHLRELRMRARQEFKPLHSLTKEEQEEEEEKRKEERDKLLNADIPESDRKAHTAIQLKLNPDGTMAIDEETMVVDRHKNASIENEYKEKVDENPFANLYNYGSYGRGSYTDPWTVEEMIKFYKALSMWGTDFNLISQLYPYRSRKQVKAKFVNEEKKRPILIELALRSKLPPNFDEYCCEIKKNIGTVADFNEKLIELQNEHKHHMKEIEEAKNTAKEEDQTAQRLNDANLNKKGSGGIMTNDLKVYRKTEVVLGTIDDLKRKKLKERNNDDNEDNEGSEEEPEIDQ.

The tract at residues 1–169 (MSSIVNKSGT…ARRLSTISNK (169 aa)) is disordered. A Phosphoserine modification is found at serine 49. A compositionally biased stretch (polar residues) spans 150–168 (LDSSSNSNGTARRLSTISN). Serine 178 carries the post-translational modification Phosphoserine. Disordered regions lie at residues 217 to 245 (SPPT…DENE) and 317 to 343 (ARQE…KEER). Composition is skewed to basic and acidic residues over residues 225-241 (SLDR…SREA) and 317-330 (ARQE…LTKE). An SANT domain is found at 415-466 (SYTDPWTVEEMIKFYKALSMWGTDFNLISQLYPYRSRKQVKAKFVNEEKKRP). Positions 520–529 (KNTAKEEDQT) are enriched in basic and acidic residues. Disordered stretches follow at residues 520–547 (KNTA…GGIM) and 567–594 (LKRK…EIDQ). Acidic residues predominate over residues 579-594 (DNEDNEGSEEEPEIDQ).

The protein belongs to the TFC5 family. TFIIIB comprises the TATA-binding protein (TBP), the B-related factor (BRF) and the B'' component (BDP1). Interacts with TFC4.

The protein resides in the nucleus. General activator of RNA polymerase III transcription. This is Transcription factor TFIIIB component B'' (BDP1) from Saccharomyces cerevisiae (strain ATCC 204508 / S288c) (Baker's yeast).